The following is a 304-amino-acid chain: Aspartate carbamoyltransferase catalytic subunit (304 aa).

2 residues coordinate carbamoyl phosphate: arginine 49 and threonine 50. Lysine 77 provides a ligand contact to L-aspartate. The carbamoyl phosphate site is built by arginine 99, histidine 127, and glutamine 130. L-aspartate contacts are provided by arginine 160 and arginine 211. Carbamoyl phosphate is bound by residues alanine 252 and proline 253.

Belongs to the aspartate/ornithine carbamoyltransferase superfamily. ATCase family. Heterododecamer (2C3:3R2) of six catalytic PyrB chains organized as two trimers (C3), and six regulatory PyrI chains organized as three dimers (R2).

The enzyme catalyses carbamoyl phosphate + L-aspartate = N-carbamoyl-L-aspartate + phosphate + H(+). It functions in the pathway pyrimidine metabolism; UMP biosynthesis via de novo pathway; (S)-dihydroorotate from bicarbonate: step 2/3. Functionally, catalyzes the condensation of carbamoyl phosphate and aspartate to form carbamoyl aspartate and inorganic phosphate, the committed step in the de novo pyrimidine nucleotide biosynthesis pathway. This Bacillus mycoides (strain KBAB4) (Bacillus weihenstephanensis) protein is Aspartate carbamoyltransferase catalytic subunit.